We begin with the raw amino-acid sequence, 158 residues long: Large ribosomal subunit protein uL11 (158 aa).

It belongs to the universal ribosomal protein uL11 family. In terms of assembly, part of the ribosomal stalk of the 50S ribosomal subunit. Interacts with L10 and the large rRNA to form the base of the stalk. L10 forms an elongated spine to which L12 dimers bind in a sequential fashion forming a multimeric L10(L12)X complex.

Its function is as follows. Forms part of the ribosomal stalk which helps the ribosome interact with GTP-bound translation factors. In Methanoregula boonei (strain DSM 21154 / JCM 14090 / 6A8), this protein is Large ribosomal subunit protein uL11.